A 439-amino-acid polypeptide reads, in one-letter code: Elongation factor Tu, mitochondrial (439 aa).

The tr-type G domain occupies 51–246; sequence KPHVNIGTIG…AVDSYITLPE (196 aa). Residues 60–67 form a G1 region; it reads GHVDHGKT. Residue 60–67 participates in GTP binding; the sequence is GHVDHGKT. Residues 101–105 form a G2 region; that stretch reads GITIS. The segment at 122–125 is G3; sequence DCPG. GTP is bound by residues 122 to 126 and 177 to 180; these read DCPGH and NKVD. Positions 177 to 180 are G4; that stretch reads NKVD. Residues 214-216 form a G5 region; it reads SAL.

It belongs to the TRAFAC class translation factor GTPase superfamily. Classic translation factor GTPase family. EF-Tu/EF-1A subfamily.

The protein localises to the mitochondrion. Functionally, this protein promotes the GTP-dependent binding of aminoacyl-tRNA to the A-site of ribosomes during protein biosynthesis. The polypeptide is Elongation factor Tu, mitochondrial (tuf1) (Schizosaccharomyces pombe (strain 972 / ATCC 24843) (Fission yeast)).